The primary structure comprises 417 residues: Phosphoglycerate kinase 2 (417 aa).

At Ser2 the chain carries N-acetylserine. A phosphoserine mark is found at Ser2 and Ser4. Lys11 carries the N6-acetyllysine modification. Residues Val23, Asp24, Phe25, Asn26, Gln38, and Arg39 each contribute to the (2R)-3-phosphoglycerate site. Lys48 carries the post-translational modification N6-acetyllysine. Residues Ser62, His63, Gly65, and Arg66 each contribute to the (2R)-3-phosphoglycerate site. An N6-acetyllysine mark is found at Lys75, Lys86, and Lys97. Leu122 and Arg123 together coordinate (2R)-3-phosphoglycerate. Lys131 and Lys146 each carry N6-acetyllysine. (2R)-3-phosphoglycerate-binding residues include His170 and Arg171. Tyr196 carries the post-translational modification Phosphotyrosine. At Lys199 the chain carries N6-acetyllysine. Residue Gly214 participates in ADP binding. Residue Gly214 coordinates CDP. AMP contacts are provided by Ala215 and Lys216. Ala215 contacts ATP. Ala215 contacts Mg(2+). 2 residues coordinate Mg(2+): Ala218 and Asp219. Asp219 contributes to the CDP binding site. An AMP-binding site is contributed by Lys220. Lys220 serves as a coordination point for ATP. Gly238 provides a ligand contact to ADP. Gly238 is a CDP binding site. AMP is bound at residue Gly239. Residue Gly239 coordinates ATP. N6-acetyllysine is present on residues Lys267 and Lys291. AMP is bound at residue Gly313. Gly313 contributes to the ATP binding site. CDP contacts are provided by Gly338 and Phe343. Position 343 (Phe343) interacts with ADP. Glu344 lines the AMP pocket. ATP is bound by residues Glu344, Asp375, and Thr376. Residue Asp375 coordinates Mg(2+).

The protein belongs to the phosphoglycerate kinase family. In terms of assembly, monomer. The cofactor is Mg(2+). As to expression, mainly found in round spermatids. Localized on the principle piece in the sperm (at protein level). Testis-specific. Expression significantly decreased in the testis of elderly men.

It localises to the cytoplasm. The enzyme catalyses (2R)-3-phosphoglycerate + ATP = (2R)-3-phospho-glyceroyl phosphate + ADP. It functions in the pathway carbohydrate degradation; glycolysis; pyruvate from D-glyceraldehyde 3-phosphate: step 2/5. In terms of biological role, essential for sperm motility and male fertility. Not required for the completion of spermatogenesis. In Homo sapiens (Human), this protein is Phosphoglycerate kinase 2 (PGK2).